A 401-amino-acid polypeptide reads, in one-letter code: Homeobox protein engrailed-1 (401 aa).

Disordered regions lie at residues 1 to 102 (MEEQ…PAAQ), 138 to 167 (GGGA…HSLG), 229 to 253 (SKPS…AKFP), and 293 to 315 (RPSS…DKRP). Positions 13-48 (DSGLGAVAAAAPSGLSLSLSPGASGSSGSDGDSVPV) are enriched in low complexity. Pro residues-rich tracts occupy residues 49–64 (SPQP…PCLP) and 73–88 (PPHP…PPPQ). A compositionally biased stretch (low complexity) spans 89–102 (HLAAPAHQPQPAAQ). 2 stretches are compositionally biased toward gly residues: residues 138-147 (GGGAAAGGGS) and 234-243 (SGGGSGGNAG). The homeobox DNA-binding region spans 312–371 (DKRPRTAFTAEQLQRLKAEFQANRYITEQRRQTLAQELSLNESQIKIWFQNKRAKIKKAT).

Belongs to the engrailed homeobox family.

The protein resides in the nucleus. Functionally, required for proper formation of the apical ectodermal ridge and correct dorsal-ventral patterning in the limb. This Mus musculus (Mouse) protein is Homeobox protein engrailed-1 (En1).